Here is a 593-residue protein sequence, read N- to C-terminus: High affinity cGMP-specific 3',5'-cyclic phosphodiesterase 9A (593 aa).

The interval 87–142 (SAGVEDKRTTSRGQSAERPLRDRRVVGLEQPRREGAFESGQVEPRPREPQGCCQEG) is disordered. Basic and acidic residues predominate over residues 104-122 (RPLRDRRVVGLEQPRREGA). Residues 236–557 (PRRDVPTYPK…DRYEELKRID (322 aa)) form the PDEase domain. Residue histidine 312 is the Proton donor of the active site. Position 312 to 316 (312 to 316 (HNFRH)) interacts with 3',5'-cyclic GMP. The Zn(2+) site is built by histidine 316, histidine 352, and aspartate 353. Position 353 (aspartate 353) interacts with 3',5'-cyclic GMP. Aspartate 353 contacts Mg(2+). Residue serine 379 is modified to Phosphoserine. 3',5'-cyclic GMP is bound by residues aspartate 462, tyrosine 484, and 512–513 (AQ). Aspartate 462 contributes to the Zn(2+) binding site. Positions 564–593 (QKKTDSLTSGATEKSRERSRDVKNSEGDCA) are disordered. A compositionally biased stretch (basic and acidic residues) spans 576 to 593 (EKSRERSRDVKNSEGDCA).

It belongs to the cyclic nucleotide phosphodiesterase family. PDE9 subfamily. In terms of assembly, homodimer. Zn(2+) is required as a cofactor. Mg(2+) serves as cofactor.

The protein localises to the cell projection. It is found in the ruffle membrane. The protein resides in the cytoplasm. Its subcellular location is the perinuclear region. It localises to the golgi apparatus. The protein localises to the endoplasmic reticulum. It is found in the cell membrane. The protein resides in the sarcolemma. It catalyses the reaction 3',5'-cyclic GMP + H2O = GMP + H(+). It functions in the pathway purine metabolism; 3',5'-cyclic GMP degradation; GMP from 3',5'-cyclic GMP: step 1/1. With respect to regulation, specifically inhibited by a compound named 3r ((R)-2-((1-cyclopentyl-4-hydroxy-1H-pyrazolo[3,4-d]pyrimidin-6- yl)amino)-N-(4-methoxyphenyl)propanamide); the inhibitor forms a hydrogen bond with Tyr-484, Ala-512 and Gln-513. Specifically hydrolyzes the second messenger cGMP, which is a key regulator of many important physiological processes. Highly specific: compared to other members of the cyclic nucleotide phosphodiesterase family, has the highest affinity and selectivity for cGMP. Specifically regulates natriuretic-peptide-dependent cGMP signaling in heart, acting as a regulator of cardiac hypertrophy in myocytes and muscle. Does not regulate nitric oxide-dependent cGMP in heart. Additional experiments are required to confirm whether its ability to hydrolyze natriuretic-peptide-dependent cGMP is specific to heart or is a general feature of the protein. In brain, involved in cognitive function, such as learning and long-term memory. The polypeptide is High affinity cGMP-specific 3',5'-cyclic phosphodiesterase 9A (PDE9A) (Pan troglodytes (Chimpanzee)).